The sequence spans 398 residues: S-adenosylmethionine synthase (398 aa).

136–141 provides a ligand contact to ATP; the sequence is GTGSSD.

It belongs to the AdoMet synthase 2 family. The cofactor is Mg(2+).

It carries out the reaction L-methionine + ATP + H2O = S-adenosyl-L-methionine + phosphate + diphosphate. Its pathway is amino-acid biosynthesis; S-adenosyl-L-methionine biosynthesis; S-adenosyl-L-methionine from L-methionine: step 1/1. Its function is as follows. Catalyzes the formation of S-adenosylmethionine from methionine and ATP. The sequence is that of S-adenosylmethionine synthase from Methanosarcina barkeri (strain Fusaro / DSM 804).